We begin with the raw amino-acid sequence, 237 residues long: Phosphoribosylaminoimidazole-succinocarboxamide synthase (237 aa).

It belongs to the SAICAR synthetase family.

The enzyme catalyses 5-amino-1-(5-phospho-D-ribosyl)imidazole-4-carboxylate + L-aspartate + ATP = (2S)-2-[5-amino-1-(5-phospho-beta-D-ribosyl)imidazole-4-carboxamido]succinate + ADP + phosphate + 2 H(+). The protein operates within purine metabolism; IMP biosynthesis via de novo pathway; 5-amino-1-(5-phospho-D-ribosyl)imidazole-4-carboxamide from 5-amino-1-(5-phospho-D-ribosyl)imidazole-4-carboxylate: step 1/2. In Listeria monocytogenes serotype 4a (strain HCC23), this protein is Phosphoribosylaminoimidazole-succinocarboxamide synthase.